Reading from the N-terminus, the 455-residue chain is Argininosuccinate lyase (455 aa).

Belongs to the lyase 1 family. Argininosuccinate lyase subfamily.

It localises to the cytoplasm. The catalysed reaction is 2-(N(omega)-L-arginino)succinate = fumarate + L-arginine. The protein operates within amino-acid biosynthesis; L-arginine biosynthesis; L-arginine from L-ornithine and carbamoyl phosphate: step 3/3. The chain is Argininosuccinate lyase from Shewanella baltica (strain OS195).